The following is an 88-amino-acid chain: Small ribosomal subunit protein bS16 (88 aa).

It belongs to the bacterial ribosomal protein bS16 family.

The polypeptide is Small ribosomal subunit protein bS16 (Anaeromyxobacter sp. (strain K)).